Here is a 351-residue protein sequence, read N- to C-terminus: Peptide chain release factor 1 (351 aa).

N5-methylglutamine is present on Gln229.

This sequence belongs to the prokaryotic/mitochondrial release factor family. Post-translationally, methylated by PrmC. Methylation increases the termination efficiency of RF1.

It localises to the cytoplasm. Its function is as follows. Peptide chain release factor 1 directs the termination of translation in response to the peptide chain termination codons UAG and UAA. This Cereibacter sphaeroides (strain KD131 / KCTC 12085) (Rhodobacter sphaeroides) protein is Peptide chain release factor 1.